A 425-amino-acid polypeptide reads, in one-letter code: Polyadenylate-binding protein RBP47B' (425 aa).

3 RRM domains span residues arginine 24 to alanine 102, histidine 116 to proline 195, and threonine 237 to asparagine 309.

The protein belongs to the polyadenylate-binding RBP47 family. Interacts with the poly(A) tail of mRNA in nucleus.

The protein resides in the nucleus. Its subcellular location is the cytoplasmic granule. Its function is as follows. Heterogeneous nuclear ribonucleoprotein (hnRNP)-protein binding the poly(A) tail of mRNA and probably involved in some steps of pre-mRNA maturation. The protein is Polyadenylate-binding protein RBP47B' (RBP47B') of Arabidopsis thaliana (Mouse-ear cress).